Reading from the N-terminus, the 129-residue chain is Small ribosomal subunit protein uS11 (129 aa).

This sequence belongs to the universal ribosomal protein uS11 family. Part of the 30S ribosomal subunit. Interacts with proteins S7 and S18. Binds to IF-3.

Located on the platform of the 30S subunit, it bridges several disparate RNA helices of the 16S rRNA. Forms part of the Shine-Dalgarno cleft in the 70S ribosome. This is Small ribosomal subunit protein uS11 from Tolumonas auensis (strain DSM 9187 / NBRC 110442 / TA 4).